The chain runs to 202 residues: Phospholipase A2 inhibitor gamma subunit A (202 aa).

A signal peptide spans 1–19 (MKSLQIICLLFIFVARGSC). 8 disulfide bridges follow: C22-C47, C25-C32, C40-C68, C74-C95, C96-C101, C119-C144, C137-C166, and C170-C192. N177 carries an N-linked (GlcNAc...) asparagine glycan.

Belongs to the CNF-like-inhibitor family. In terms of assembly, heterodimer of subunit A and subunit B. N-glycosylated. In terms of tissue distribution, expressed by the liver. Not expressed in esophagus, stomach, pancreas, spleen, gall bladder, small intestine, rectum, kidney, trachea, lung, testis and body fat.

Its subcellular location is the secreted. Functionally, inhibits the enzymatic activity of all phospholipase A2 (PA2) groups. The chain is Phospholipase A2 inhibitor gamma subunit A from Elaphe quadrivirgata (Japanese four-lined ratsnake).